Here is a 282-residue protein sequence, read N- to C-terminus: Pantothenate synthetase (282 aa).

30–37 is an ATP binding site; the sequence is MGYLHEGH. Residue His-37 is the Proton donor of the active site. Residue Gln-61 participates in (R)-pantoate binding. A beta-alanine-binding site is contributed by Gln-61. Position 147–150 (147–150) interacts with ATP; that stretch reads GMKD. Gln-153 serves as a coordination point for (R)-pantoate. Residues Val-176 and 184-187 each bind ATP; that span reads KSSR.

Belongs to the pantothenate synthetase family. Homodimer.

It localises to the cytoplasm. The enzyme catalyses (R)-pantoate + beta-alanine + ATP = (R)-pantothenate + AMP + diphosphate + H(+). The protein operates within cofactor biosynthesis; (R)-pantothenate biosynthesis; (R)-pantothenate from (R)-pantoate and beta-alanine: step 1/1. Catalyzes the condensation of pantoate with beta-alanine in an ATP-dependent reaction via a pantoyl-adenylate intermediate. The protein is Pantothenate synthetase of Bacillus thuringiensis (strain Al Hakam).